The primary structure comprises 1300 residues: Zinc finger protein 536 (1300 aa).

2 disordered regions span residues 1–26 (MEEA…GPVL) and 47–77 (FPEL…GQPM). Residues 48 to 69 (PELHPRPNPEEKPPASLEEKAH) are compositionally biased toward basic and acidic residues. 6 consecutive C2H2-type zinc fingers follow at residues 130–152 (YPCP…MRTH), 158–180 (FKCP…LRTH), 274–297 (FRCT…RILH), 300–323 (YKCT…EKAH), 345–367 (FRCE…MRKH), and 373–395 (HCCQ…MKVH). Disordered regions lie at residues 584–604 (HSTK…LESS) and 650–739 (SRVH…QQPA). Residues 594-604 (LPSKLDPLESS) are compositionally biased toward basic and acidic residues. A C2H2-type 7 zinc finger spans residues 631–653 (TECPDCGRVFRTYHQVVVHSRVH). Residues 657–674 (RKGEEDGLHVGLDERRGS) are compositionally biased toward basic and acidic residues. Polar residues predominate over residues 675-696 (GSDQESQSVSRSTTPGSSNVTE). 2 C2H2-type zinc fingers span residues 751-773 (KDCP…LRIH) and 779-801 (YKCP…LERH). Positions 802–826 (HRERQNGAGPLSGQPPNQDHKDEMS) are disordered. A phosphoserine mark is found at serine 826 and serine 827. Positions 856–880 (SQQWTSGVLSSGDHSGQATGMSSEV) are enriched in polar residues. Disordered stretches follow at residues 856–893 (SQQW…LPSK), 937–985 (KDKA…PDAA), and 1124–1260 (SGAS…SLDK). Basic and acidic residues-rich tracts occupy residues 950–972 (HGVD…EKSQ) and 1133–1143 (KEPDGKAHSEE). Acidic residues-rich tracts occupy residues 1160–1170 (DLSDIASSEDM) and 1178–1187 (NDEEDVETEP). A compositionally biased stretch (low complexity) spans 1194 to 1209 (LSALSKDSSSDGGDSL).

The protein belongs to the krueppel C2H2-type zinc-finger protein family.

It localises to the nucleus. In terms of biological role, transcriptional repressor that negatively regulates neuron differentiation by repressing retinoic acid-induced gene transcription. Binds and interrupts RARA from binding to retinoic acid response elements (RARE) composed of tandem 5'-AGGTCA-3' sites known as DR1-DR5. Recognizes and binds 2 copies of the core DNA sequence 5'-CCCCCA-3'. The sequence is that of Zinc finger protein 536 (ZNF536) from Homo sapiens (Human).